Here is a 124-residue protein sequence, read N- to C-terminus: Large ribosomal subunit protein bL21 (124 aa).

Residues 105–124 are disordered; it reads TVKAEPKSKRAPAPEAAADA. Over residues 115–124 the composition is skewed to low complexity; the sequence is APAPEAAADA.

It belongs to the bacterial ribosomal protein bL21 family. In terms of assembly, part of the 50S ribosomal subunit. Contacts protein L20.

Functionally, this protein binds to 23S rRNA in the presence of protein L20. The protein is Large ribosomal subunit protein bL21 of Xanthobacter autotrophicus (strain ATCC BAA-1158 / Py2).